The sequence spans 386 residues: Probable dual-specificity RNA methyltransferase RlmN (386 aa).

The active-site Proton acceptor is E123. One can recognise a Radical SAM core domain in the interval 129-372; sequence YPTRTTLCIS…ATLRDTRGQD (244 aa). C136 and C377 are oxidised to a cystine. [4Fe-4S] cluster-binding residues include C143, C147, and C150. S-adenosyl-L-methionine is bound by residues 198–199, S232, 255–257, and N334; these read GE and SLH. C377 serves as the catalytic S-methylcysteine intermediate.

Belongs to the radical SAM superfamily. RlmN family. [4Fe-4S] cluster serves as cofactor.

It localises to the cytoplasm. The catalysed reaction is adenosine(2503) in 23S rRNA + 2 reduced [2Fe-2S]-[ferredoxin] + 2 S-adenosyl-L-methionine = 2-methyladenosine(2503) in 23S rRNA + 5'-deoxyadenosine + L-methionine + 2 oxidized [2Fe-2S]-[ferredoxin] + S-adenosyl-L-homocysteine. It carries out the reaction adenosine(37) in tRNA + 2 reduced [2Fe-2S]-[ferredoxin] + 2 S-adenosyl-L-methionine = 2-methyladenosine(37) in tRNA + 5'-deoxyadenosine + L-methionine + 2 oxidized [2Fe-2S]-[ferredoxin] + S-adenosyl-L-homocysteine. Its function is as follows. Specifically methylates position 2 of adenine 2503 in 23S rRNA and position 2 of adenine 37 in tRNAs. The chain is Probable dual-specificity RNA methyltransferase RlmN from Bifidobacterium adolescentis (strain ATCC 15703 / DSM 20083 / NCTC 11814 / E194a).